The sequence spans 736 residues: Microtubule-associated protein mu-2 (736 aa).

Belongs to the orthoreovirus mu-2 protein family. Interacts with protein mu-NS; in viral inclusions. Interacts with polymerase lambda-3; this interaction stimulates the ATPase activity of mu-2. The cofactor is a divalent metal cation.

It is found in the virion. The protein localises to the host cytoplasm. The protein resides in the host cytoskeleton. Minor inner capsid (core) component. Displays NTPase and RNA 5'-triphosphatase (RTPase) activities. ATP is the preferred substrate for hydrolysis. May function as a cofactor of polymerase lambda-3. Associates with microtubules and plays a role in the formation, structural organization and morphology of viral inclusions, where the assembly of cores and the replication of viral RNA occur. Together with mu-NS, recruits the other core proteins to these inclusions. The protein is Microtubule-associated protein mu-2 (M1) of Mammalia (T1L).